A 497-amino-acid chain; its full sequence is UPF0371 protein cu0538 (497 aa).

Belongs to the UPF0371 family.

This is UPF0371 protein cu0538 from Corynebacterium urealyticum (strain ATCC 43042 / DSM 7109).